The following is a 101-amino-acid chain: Small ribosomal subunit protein uS14 (101 aa).

The protein belongs to the universal ribosomal protein uS14 family. In terms of assembly, part of the 30S ribosomal subunit. Contacts proteins S3 and S10.

In terms of biological role, binds 16S rRNA, required for the assembly of 30S particles and may also be responsible for determining the conformation of the 16S rRNA at the A site. The protein is Small ribosomal subunit protein uS14 of Anaplasma phagocytophilum (strain HZ).